The following is a 447-amino-acid chain: Glutamate--tRNA ligase 1 (447 aa).

The 'HIGH' region motif lies at 10–20 (PSPTGMLHVGN). A 'KMSKS' region motif is present at residues 240–244 (KISKR). Lysine 243 is an ATP binding site.

It belongs to the class-I aminoacyl-tRNA synthetase family. Glutamate--tRNA ligase type 1 subfamily. In terms of assembly, monomer.

Its subcellular location is the cytoplasm. It catalyses the reaction tRNA(Glu) + L-glutamate + ATP = L-glutamyl-tRNA(Glu) + AMP + diphosphate. Its function is as follows. Catalyzes the attachment of glutamate to tRNA(Glu) in a two-step reaction: glutamate is first activated by ATP to form Glu-AMP and then transferred to the acceptor end of tRNA(Glu). The protein is Glutamate--tRNA ligase 1 of Rickettsia akari (strain Hartford).